The sequence spans 692 residues: Protein hook (692 aa).

Residues 6–123 enclose the Calponin-homology (CH) domain; that stretch reads SEMYYSLLEW…RLLQLVLGCA (118 aa). Positions 135-576 form a coiled coil; the sequence is EIMGLEEELQ…YQSKVIQLET (442 aa). A disordered region spans residues 161 to 180; the sequence is AGERSPSSSASGGAGSGGAV.

This sequence belongs to the hook family. As to quaternary structure, homodimer. Interacts with microtubules via its N-terminus.

It localises to the cytoplasm. It is found in the cytoskeleton. The protein resides in the endosome. Its subcellular location is the synapse. Functionally, involved in endocytic trafficking by stabilizing organelles of the endocytic pathway. Probably acts as a cytoskeletal linker protein required to tether endosome vesicles to the cytoskeleton. Involved in modulation of endocytosis at stages required for down-regulation of membrane proteins that control synapse size. Not involved in synaptic vesicle recycling. Required in R7 cells for boss endocytosis into multivesicular bodies (MVBs). Has a role in regulating adult longevity. The protein is Protein hook of Drosophila willistoni (Fruit fly).